The primary structure comprises 405 residues: Probable tRNA sulfurtransferase (405 aa).

Residues 60–165 (DQVMARLSQV…REAIYLSTKT (106 aa)) enclose the THUMP domain. ATP-binding positions include 183 to 184 (ML), 208 to 209 (HF), Arg-265, Gly-287, and Gln-296.

This sequence belongs to the ThiI family.

The protein resides in the cytoplasm. It carries out the reaction [ThiI sulfur-carrier protein]-S-sulfanyl-L-cysteine + a uridine in tRNA + 2 reduced [2Fe-2S]-[ferredoxin] + ATP + H(+) = [ThiI sulfur-carrier protein]-L-cysteine + a 4-thiouridine in tRNA + 2 oxidized [2Fe-2S]-[ferredoxin] + AMP + diphosphate. The enzyme catalyses [ThiS sulfur-carrier protein]-C-terminal Gly-Gly-AMP + S-sulfanyl-L-cysteinyl-[cysteine desulfurase] + AH2 = [ThiS sulfur-carrier protein]-C-terminal-Gly-aminoethanethioate + L-cysteinyl-[cysteine desulfurase] + A + AMP + 2 H(+). Its pathway is cofactor biosynthesis; thiamine diphosphate biosynthesis. In terms of biological role, catalyzes the ATP-dependent transfer of a sulfur to tRNA to produce 4-thiouridine in position 8 of tRNAs, which functions as a near-UV photosensor. Also catalyzes the transfer of sulfur to the sulfur carrier protein ThiS, forming ThiS-thiocarboxylate. This is a step in the synthesis of thiazole, in the thiamine biosynthesis pathway. The sulfur is donated as persulfide by IscS. The polypeptide is Probable tRNA sulfurtransferase (Lacticaseibacillus paracasei (strain ATCC 334 / BCRC 17002 / CCUG 31169 / CIP 107868 / KCTC 3260 / NRRL B-441) (Lactobacillus paracasei)).